The primary structure comprises 423 residues: Kynureninase (423 aa).

Pyridoxal 5'-phosphate is bound by residues leucine 105, serine 106, 133–136, aspartate 218, histidine 221, and tyrosine 243; that span reads FPSD. Residue lysine 244 is modified to N6-(pyridoxal phosphate)lysine. The pyridoxal 5'-phosphate site is built by tryptophan 273 and asparagine 301.

The protein belongs to the kynureninase family. As to quaternary structure, homodimer. Pyridoxal 5'-phosphate is required as a cofactor.

It catalyses the reaction L-kynurenine + H2O = anthranilate + L-alanine + H(+). It carries out the reaction 3-hydroxy-L-kynurenine + H2O = 3-hydroxyanthranilate + L-alanine + H(+). It functions in the pathway amino-acid degradation; L-kynurenine degradation; L-alanine and anthranilate from L-kynurenine: step 1/1. Its pathway is cofactor biosynthesis; NAD(+) biosynthesis; quinolinate from L-kynurenine: step 2/3. Functionally, catalyzes the cleavage of L-kynurenine (L-Kyn) and L-3-hydroxykynurenine (L-3OHKyn) into anthranilic acid (AA) and 3-hydroxyanthranilic acid (3-OHAA), respectively. This chain is Kynureninase, found in Xanthomonas oryzae pv. oryzae (strain KACC10331 / KXO85).